We begin with the raw amino-acid sequence, 501 residues long: Cytochrome P450 monooxygenase notH (501 aa).

A helical membrane pass occupies residues 11-31 (LGLESVGWVLGLLTTSILYLF). Asn-298 carries N-linked (GlcNAc...) asparagine glycosylation. Cys-442 provides a ligand contact to heme.

Belongs to the cytochrome P450 family. It depends on heme as a cofactor.

It is found in the membrane. It participates in alkaloid biosynthesis. In terms of biological role, cytochrome P450 monooxygenase; part of the gene cluster that mediates the biosynthesis of notoamide, a fungal indole alkaloid that belongs to a family of natural products containing a characteristic bicyclo[2.2.2]diazaoctane core. The first step of notoamide biosynthesis involves coupling of L-proline and L-tryptophan by the bimodular NRPS notE, to produce cyclo-L-tryptophan-L-proline called brevianamide F. The reverse prenyltransferase notF then acts as a deoxybrevianamide E synthase and converts brevianamide F to deoxybrevianamide E via reverse prenylation at C-2 of the indole ring leading to the bicyclo[2.2.2]diazaoctane core. Deoxybrevianamide E is further hydroxylated at C-6 of the indole ring, likely catalyzed by the cytochrome P450 monooxygenase notG, to yield 6-hydroxy-deoxybrevianamide E. 6-hydroxy-deoxybrevianamide E is a specific substrate of the prenyltransferase notC for normal prenylation at C-7 to produce 6-hydroxy-7-prenyl-deoxybrevianamide, also called notoamide S. As the proposed pivotal branching point in notoamide biosynthesis, notoamide S can be diverted to notoamide E through an oxidative pyran ring closure putatively catalyzed by either notH cytochrome P450 monooxygenase or the notD FAD-linked oxidoreductase. This step would be followed by an indole 2,3-epoxidation-initiated pinacol-like rearrangement catalyzed by the notB FAD-dependent monooxygenase leading to the formation of notoamide C and notoamide D. On the other hand notoamide S is converted to notoamide T by notH (or notD), a bifunctional oxidase that also functions as the intramolecular Diels-Alderase responsible for generation of (+)-notoamide T. To generate antipodal (-)-notoaminide T, notH' (or notD') in Aspergillus versicolor is expected to catalyze a Diels-Alder reaction leading to the opposite stereochemistry. The remaining oxidoreductase notD (or notH) likely catalyzes the oxidative pyran ring formation to yield (+)-stephacidin A. The FAD-dependent monooxygenase notI is highly similar to notB and is predicted to catalyze a similar conversion from (+)-stephacidin A to (-)-notoamide B via the 2,3-epoxidation of (+)-stephacidin A followed by a pinacol-type rearrangement. Finally, it remains unclear which enzyme could be responsible for the final hydroxylation steps leading to notoamide A and sclerotiamide. This chain is Cytochrome P450 monooxygenase notH, found in Aspergillus sp. (strain MF297-2).